The chain runs to 1108 residues: Retinal guanylyl cyclase 1 (1108 aa).

Positions 1-54 (MSAWLLPAGGFPGAGFCIPAWQSRSSLSRVLRWPGPGLPGLLLLLLLPSPSAFS) are cleaved as a signal peptide. Residues 55-465 (AVFKVGVLGP…PDVICNGGVE (411 aa)) are Extracellular-facing. Cys-108 and Cys-136 are disulfide-bonded. N-linked (GlcNAc...) asparagine glycosylation is present at Asn-300. A helical transmembrane segment spans residues 466–490 (PGLVFVGFLLVIVVGLTGAFLAHYL). Residues 491–1108 (RHRLLHMQMV…KARPGQFTGK (618 aa)) are Cytoplasmic-facing. The segment at 520 to 552 (GGSSRKVAQGSRSSLATRSTSDIRSVPSQPQES) is disordered. The Protein kinase domain maps to 520–811 (GGSSRKVAQG…DLTFDLFKGI (292 aa)). Positions 529–552 (GSRSSLATRSTSDIRSVPSQPQES) are enriched in polar residues. Residues 883–1013 (TLYFSDIVGF…DTVNTASRME (131 aa)) form the Guanylate cyclase domain. Residues 1069-1108 (IPKPPDLQPGASNHGISLQEIPPERRKKLEKARPGQFTGK) are disordered.

It belongs to the adenylyl cyclase class-4/guanylyl cyclase family. In terms of assembly, homodimer; requires homodimerization for guanylyl cyclase activity. Interacts (via C-terminus) with RD3 (via C-terminus); promotes the exit of GUCY2E from the endoplasmic reticulum and its trafficking to the photoreceptor outer segments. Interaction with RD3 negatively regulates GUCY2E guanylate cyclase activity. In terms of processing, there are 9 conserved cysteine residues in sensory guanylate cyclases, 6 in the extracellular domain, which may be involved in intra- or interchain disulfide bonds. As to expression, expressed in retina and enriched in photoreceptor outer segments.

The protein resides in the membrane. The protein localises to the photoreceptor outer segment membrane. Its subcellular location is the endoplasmic reticulum membrane. The catalysed reaction is GTP = 3',5'-cyclic GMP + diphosphate. With respect to regulation, activated by GUCA1A when free calcium ions concentration is low, and inhibited by GUCA1A when free calcium ions concentration is high. Negatively regulated by RD3; inhibits the basal and GUCA1A-stimulated guanylate cyclase activity. Catalyzes the synthesis of cyclic GMP (cGMP) in rods and cones of photoreceptors. Plays an essential role in phototransduction, by mediating cGMP replenishment. May also participate in the trafficking of membrane-asociated proteins to the photoreceptor outer segment membrane. The protein is Retinal guanylyl cyclase 1 (Gucy2e) of Rattus norvegicus (Rat).